A 229-amino-acid chain; its full sequence is Peptidase E (229 aa).

Catalysis depends on charge relay system residues Ser-120, Asp-135, and His-157.

Belongs to the peptidase S51 family.

It is found in the cytoplasm. The catalysed reaction is Dipeptidase E catalyzes the hydrolysis of dipeptides Asp-|-Xaa. It does not act on peptides with N-terminal Glu, Asn or Gln, nor does it cleave isoaspartyl peptides.. Functionally, hydrolyzes dipeptides containing N-terminal aspartate residues. May play a role in allowing the cell to use peptide aspartate to spare carbon otherwise required for the synthesis of the aspartate family of amino acids. This Shigella flexneri serotype 5b (strain 8401) protein is Peptidase E.